The chain runs to 690 residues: Proprotein convertase subtilisin/kexin type 9 (690 aa).

Positions 1 to 28 (MGTVSSRRSWWPLPLLLLLLLGPAGARA) are cleaved as a signal peptide. Residues 29–150 (QEDEDGDYEE…IEEDSSVFAQ (122 aa)) constitute a propeptide that is removed on maturation. Y36 is subject to Sulfotyrosine. A Phosphoserine modification is found at S45. In terms of domain architecture, Inhibitor I9 spans 75-147 (TYVVVLKEET…VDYIEEDSSV (73 aa)). Residues 153-459 (PWNLERITPP…GWQLFCRTVW (307 aa)) enclose the Peptidase S8 domain. Active-site charge relay system residues include D184 and H224. Disulfide bonds link C221–C253 and C321–C356. S384 serves as the catalytic Charge relay system. The tract at residues 448-690 (GAGWQLFCRT…HLVQASQELQ (243 aa)) is C-terminal domain. 3 disulfide bridges follow: C455/C525, C475/C524, and C484/C507. A glycan (N-linked (GlcNAc...) asparagine) is linked at N531. Disulfide bonds link C532–C599, C550–C598, C560–C586, C606–C677, C624–C676, and C633–C652. Position 686 is a phosphoserine (S686).

It belongs to the peptidase S8 family. Monomer. Can self-associate to form dimers and higher multimers which may have increased LDLR degrading activity. The precursor protein but not the mature protein may form multimers. Interacts with APOB, VLDLR, LRP8/APOER2 and BACE1. The full-length immature form (pro-PCSK9) interacts with SCNN1A, SCNN1B and SCNN1G. The pro-PCSK9 form (via C-terminal domain) interacts with LDLR. Interacts (via the C-terminal domain) with ANXA2 (via repeat Annexin 1); the interaction inhibits the degradation of LDLR. The cofactor is Ca(2+). In terms of processing, cleavage by furin and PCSK5 generates a truncated inactive protein that is unable to induce LDLR degradation. Undergoes autocatalytic cleavage in the endoplasmic reticulum to release the propeptide from the N-terminus and the cleavage of the propeptide is strictly required for its maturation and activation. The cleaved propeptide however remains associated with the catalytic domain through non-covalent interactions, preventing potential substrates from accessing its active site. As a result, it is secreted from cells as a propeptide-containing, enzymatically inactive protein. Post-translationally, phosphorylation protects the propeptide against proteolysis.

The protein localises to the cytoplasm. Its subcellular location is the secreted. It is found in the endosome. The protein resides in the lysosome. It localises to the cell surface. The protein localises to the endoplasmic reticulum. Its subcellular location is the golgi apparatus. Its activity is regulated as follows. Its proteolytic activity is autoinhibited by the non-covalent binding of the propeptide to the catalytic domain. Inhibited by EGTA. Crucial player in the regulation of plasma cholesterol homeostasis. Binds to low-density lipid receptor family members: low density lipoprotein receptor (LDLR), very low density lipoprotein receptor (VLDLR), apolipoprotein E receptor (LRP1/APOER) and apolipoprotein receptor 2 (LRP8/APOER2), and promotes their degradation in intracellular acidic compartments. Acts via a non-proteolytic mechanism to enhance the degradation of the hepatic LDLR through a clathrin LDLRAP1/ARH-mediated pathway. May prevent the recycling of LDLR from endosomes to the cell surface or direct it to lysosomes for degradation. Can induce ubiquitination of LDLR leading to its subsequent degradation. Inhibits intracellular degradation of APOB via the autophagosome/lysosome pathway in a LDLR-independent manner. Involved in the disposal of non-acetylated intermediates of BACE1 in the early secretory pathway. Inhibits epithelial Na(+) channel (ENaC)-mediated Na(+) absorption by reducing ENaC surface expression primarily by increasing its proteasomal degradation. Regulates neuronal apoptosis via modulation of LRP8/APOER2 levels and related anti-apoptotic signaling pathways. In Gorilla gorilla gorilla (Western lowland gorilla), this protein is Proprotein convertase subtilisin/kexin type 9 (PCSK9).